Consider the following 464-residue polypeptide: Phospho-2-dehydro-3-deoxyheptonate aldolase AroG (464 aa).

Cys-87 provides a ligand contact to Mn(2+). Phosphoenolpyruvate is bound by residues Arg-126, 285 to 286 (ER), Lys-308, and Arg-339. The Mn(2+) site is built by His-371, Glu-413, and Asp-443.

Belongs to the class-II DAHP synthase family. Homodimer. Probably interacts with MSMEG_5536. The cofactor is Mn(2+). Co(2+) is required as a cofactor. Requires Cd(2+) as cofactor.

It catalyses the reaction D-erythrose 4-phosphate + phosphoenolpyruvate + H2O = 7-phospho-2-dehydro-3-deoxy-D-arabino-heptonate + phosphate. It participates in metabolic intermediate biosynthesis; chorismate biosynthesis; chorismate from D-erythrose 4-phosphate and phosphoenolpyruvate: step 1/7. Catalyzes an aldol-like condensation reaction between phosphoenolpyruvate (PEP) and D-erythrose 4-phosphate (E4P) to generate 3-deoxy-D-arabino-heptulosonate 7-phosphate (DAH7P) and inorganic phosphate. The chain is Phospho-2-dehydro-3-deoxyheptonate aldolase AroG (aroG) from Mycolicibacterium smegmatis (strain ATCC 700084 / mc(2)155) (Mycobacterium smegmatis).